Consider the following 465-residue polypeptide: Cysteine--tRNA ligase (465 aa).

Cys-27 serves as a coordination point for Zn(2+). Positions 29–39 (PTVYDEVHIGH) match the 'HIGH' region motif. Zn(2+)-binding residues include Cys-204, His-229, and Glu-233. Positions 261–265 (KMSKS) match the 'KMSKS' region motif. Residue Lys-264 coordinates ATP.

It belongs to the class-I aminoacyl-tRNA synthetase family. Zn(2+) serves as cofactor.

The protein resides in the cytoplasm. The catalysed reaction is tRNA(Cys) + L-cysteine + ATP = L-cysteinyl-tRNA(Cys) + AMP + diphosphate. The sequence is that of Cysteine--tRNA ligase from Metallosphaera sedula (strain ATCC 51363 / DSM 5348 / JCM 9185 / NBRC 15509 / TH2).